The sequence spans 208 residues: Uracil phosphoribosyltransferase (208 aa).

5-phospho-alpha-D-ribose 1-diphosphate contacts are provided by residues arginine 78, arginine 103, and 130 to 138 (DPMFATGGT). Uracil contacts are provided by residues isoleucine 193 and 198-200 (GDA). Aspartate 199 provides a ligand contact to 5-phospho-alpha-D-ribose 1-diphosphate.

Belongs to the UPRTase family. Requires Mg(2+) as cofactor.

The enzyme catalyses UMP + diphosphate = 5-phospho-alpha-D-ribose 1-diphosphate + uracil. It functions in the pathway pyrimidine metabolism; UMP biosynthesis via salvage pathway; UMP from uracil: step 1/1. With respect to regulation, allosterically activated by GTP. In terms of biological role, catalyzes the conversion of uracil and 5-phospho-alpha-D-ribose 1-diphosphate (PRPP) to UMP and diphosphate. This is Uracil phosphoribosyltransferase from Campylobacter concisus (strain 13826).